We begin with the raw amino-acid sequence, 179 residues long: Inner membrane-spanning protein YciB (179 aa).

Helical transmembrane passes span 22-42 (IYAA…YSWV), 50-70 (MALI…FFHN), 76-96 (WKVT…QWVM), 121-141 (LAWA…AFWL), and 149-169 (FKVF…GIYI).

The protein belongs to the YciB family.

Its subcellular location is the cell inner membrane. Plays a role in cell envelope biogenesis, maintenance of cell envelope integrity and membrane homeostasis. This Escherichia coli O127:H6 (strain E2348/69 / EPEC) protein is Inner membrane-spanning protein YciB.